The chain runs to 359 residues: Membrane-bound lytic murein transglycosylase C (359 aa).

The N-terminal stretch at 1–16 (MKKYLALALIAPLLIS) is a signal peptide. The N-palmitoyl cysteine moiety is linked to residue cysteine 17. The S-diacylglycerol cysteine moiety is linked to residue cysteine 17.

It belongs to the transglycosylase Slt family.

Its subcellular location is the cell outer membrane. The catalysed reaction is Exolytic cleavage of the (1-&gt;4)-beta-glycosidic linkage between N-acetylmuramic acid (MurNAc) and N-acetylglucosamine (GlcNAc) residues in peptidoglycan, from either the reducing or the non-reducing ends of the peptidoglycan chains, with concomitant formation of a 1,6-anhydrobond in the MurNAc residue.. Its function is as follows. Murein-degrading enzyme. May play a role in recycling of muropeptides during cell elongation and/or cell division. This is Membrane-bound lytic murein transglycosylase C from Escherichia coli (strain SE11).